A 471-amino-acid chain; its full sequence is Cytidine and dCMP deaminase domain-containing protein 1 (471 aa).

A disordered region spans residues 1 to 27 (MAESNSWRSHRESDGNRSIPNGDDARN). 2 CMP/dCMP-type deaminase domains span residues 57–153 (LWME…LLSE) and 312–460 (GVIR…KLNG). Residues His99, Cys124, Cys127, and His393 each coordinate Zn(2+). Glu395 acts as the Proton donor in catalysis. Zn(2+) is bound by residues Cys421 and Cys424.

This sequence belongs to the cytidine and deoxycytidylate deaminase family. Requires Zn(2+) as cofactor.

It catalyses the reaction 2'-deoxycytidine + H2O + H(+) = 2'-deoxyuridine + NH4(+). It carries out the reaction cytidine + H2O + H(+) = uridine + NH4(+). Its function is as follows. Catalyzes the deamination of cytidine and deoxycytidine into uridine and deoxyuridine, respectively. This chain is Cytidine and dCMP deaminase domain-containing protein 1 (cdadc1), found in Danio rerio (Zebrafish).